A 337-amino-acid polypeptide reads, in one-letter code: LIX1-like protein (337 aa).

Positions 1 to 55 are disordered; that stretch reads METMRAQRLQPGVGVGGRGTLRALRPGVTGAPTSAATPPVGPPPAPPPPAPPLPP. Low complexity predominate over residues 26-38; that stretch reads PGVTGAPTSAATP. Over residues 39–55 the composition is skewed to pro residues; that stretch reads PVGPPPAPPPPAPPLPP.

This sequence belongs to the LIX1 family.

This Mus musculus (Mouse) protein is LIX1-like protein (Lix1l).